Here is a 101-residue protein sequence, read N- to C-terminus: uncharacterized protein (101 aa).

Over residues 1 to 12 (MAAFQHRAKRSK) the composition is skewed to basic residues. Disordered stretches follow at residues 1–30 (MAAF…KKRA) and 65–87 (AQDQ…NVDK). Low complexity predominate over residues 65–78 (AQDQRSDAQAQQQR).

This is an uncharacterized protein from Eremothecium gossypii (strain ATCC 10895 / CBS 109.51 / FGSC 9923 / NRRL Y-1056) (Yeast).